Reading from the N-terminus, the 400-residue chain is MGAPLSTARRGMGQNLSVPNPLGFFPDHQLDPLFRANSSSPDWDFNTNKDNWPMANKVGVGGFGPGFTPPHGGLLGWSPQAQGILTTSPPDPPPASTNRRSGRKPTPVSPPLRDTHPQAMQWNSTQFHQALLDPRVRGLYFPAGGSSSETQNPAPTIASLTSSIFSKTGDPAMNMENITSGLLRPLLVLQAVCFLLTKILTIPQSLDSWWTSLNFLGVPPGCPGQNSQSPISNHLPTSCPPTCPGYRWMCLRRFIIFLFILLLCLIFLLVLLDYQGMLPVCPLLPGSTTTSTGPCKTCTTLAQGTSMFPSCCCTKPSDGNCTCIPIPSSWAFGKYLWEWASARFSWLSLLVQFVQWCVGLSPTVWLLVIWMIWYWGPNLCSILSPFIPLLPIFCYLWASI.

Position 1 is an N-acetylmethionine (M1). Residue G2 is the site of N-myristoyl glycine; by host attachment. Positions 2 to 119 (GAPLSTARRG…PPLRDTHPQA (118 aa)) are pre-S1. A pre-S region spans residues 2-174 (GAPLSTARRG…FSKTGDPAMN (173 aa)). Residues 2 to 181 (GAPLSTARRG…AMNMENITSG (180 aa)) are Virion surface; in external conformation-facing. At 2-253 (GAPLSTARRG…PGYRWMCLRR (252 aa)) the chain is on the intravirion; in internal conformation side. P4 carries an N-linked (GlcNAc...) asparagine glycan. The disordered stretch occupies residues 70–115 (PHGGLLGWSPQAQGILTTSPPDPPPASTNRRSGRKPTPVSPPLRDT). The segment covering 79 to 88 (PQAQGILTTS) has biased composition (polar residues). Residues 120–174 (MQWNSTQFHQALLDPRVRGLYFPAGGSSSETQNPAPTIASLTSSIFSKTGDPAMN) are pre-S2. The helical transmembrane segment at 182 to 202 (LLRPLLVLQAVCFLLTKILTI) threads the bilayer. Residues 203 to 253 (PQSLDSWWTSLNFLGVPPGCPGQNSQSPISNHLPTSCPPTCPGYRWMCLRR) lie on the Intravirion; in external conformation side of the membrane. Residues 254–274 (FIIFLFILLLCLIFLLVLLDY) form a helical membrane-spanning segment. Topologically, residues 275-348 (QGMLPVCPLL…WASARFSWLS (74 aa)) are virion surface. Residue N320 is glycosylated (N-linked (GlcNAc...) asparagine; by host). Residues 349–369 (LLVQFVQWCVGLSPTVWLLVI) form a helical membrane-spanning segment. The Intravirion segment spans residues 370–375 (WMIWYW). A helical transmembrane segment spans residues 376 to 398 (GPNLCSILSPFIPLLPIFCYLWA). At 399–400 (SI) the chain is on the virion surface side.

It belongs to the orthohepadnavirus major surface antigen family. In terms of assembly, in its internal form (Li-HBsAg), interacts with the capsid protein and with the isoform S. Interacts with host chaperone CANX. Associates with host chaperone CANX through its pre-S2 N glycan; this association may be essential for isoform M proper secretion. As to quaternary structure, interacts with isoform L. Interacts with the antigens of satellite virus HDV (HDVAgs); this interaction is required for encapsidation of HDV genomic RNA. Post-translationally, isoform M is N-terminally acetylated by host at a ratio of 90%, and N-glycosylated by host at the pre-S2 region. In terms of processing, myristoylated.

It localises to the virion membrane. Its function is as follows. The large envelope protein exists in two topological conformations, one which is termed 'external' or Le-HBsAg and the other 'internal' or Li-HBsAg. In its external conformation the protein attaches the virus to cell receptors and thereby initiating infection. This interaction determines the species specificity and liver tropism. This attachment induces virion internalization predominantly through caveolin-mediated endocytosis. The large envelope protein also assures fusion between virion membrane and endosomal membrane. In its internal conformation the protein plays a role in virion morphogenesis and mediates the contact with the nucleocapsid like a matrix protein. Functionally, the middle envelope protein plays an important role in the budding of the virion. It is involved in the induction of budding in a nucleocapsid independent way. In this process the majority of envelope proteins bud to form subviral lipoprotein particles of 22 nm of diameter that do not contain a nucleocapsid. In Hepatitis B virus genotype H (isolate United States/LAS2523/2002) (HBV-H), this protein is Large envelope protein.